The primary structure comprises 305 residues: Orotidine 5'-phosphate decarboxylase (305 aa).

Lys108 functions as the Proton donor in the catalytic mechanism.

It belongs to the OMP decarboxylase family. Type 2 subfamily.

It catalyses the reaction orotidine 5'-phosphate + H(+) = UMP + CO2. It participates in pyrimidine metabolism; UMP biosynthesis via de novo pathway; UMP from orotate: step 2/2. The polypeptide is Orotidine 5'-phosphate decarboxylase (Caldicellulosiruptor saccharolyticus (strain ATCC 43494 / DSM 8903 / Tp8T 6331)).